Here is an 872-residue protein sequence, read N- to C-terminus: Alanine--tRNA ligase (872 aa).

Residues His-567, His-571, Cys-669, and His-673 each contribute to the Zn(2+) site.

It belongs to the class-II aminoacyl-tRNA synthetase family. The cofactor is Zn(2+).

The protein localises to the cytoplasm. It carries out the reaction tRNA(Ala) + L-alanine + ATP = L-alanyl-tRNA(Ala) + AMP + diphosphate. Its function is as follows. Catalyzes the attachment of alanine to tRNA(Ala) in a two-step reaction: alanine is first activated by ATP to form Ala-AMP and then transferred to the acceptor end of tRNA(Ala). Also edits incorrectly charged Ser-tRNA(Ala) and Gly-tRNA(Ala) via its editing domain. The sequence is that of Alanine--tRNA ligase from Streptococcus gordonii (strain Challis / ATCC 35105 / BCRC 15272 / CH1 / DL1 / V288).